A 260-amino-acid chain; its full sequence is Hydroxyethylthiazole kinase (260 aa).

ATP-binding residues include Arg-126 and Ser-172. Gly-199 provides a ligand contact to substrate.

The protein belongs to the Thz kinase family. It depends on Mg(2+) as a cofactor.

The enzyme catalyses 5-(2-hydroxyethyl)-4-methylthiazole + ATP = 4-methyl-5-(2-phosphooxyethyl)-thiazole + ADP + H(+). The protein operates within cofactor biosynthesis; thiamine diphosphate biosynthesis; 4-methyl-5-(2-phosphoethyl)-thiazole from 5-(2-hydroxyethyl)-4-methylthiazole: step 1/1. In terms of biological role, catalyzes the phosphorylation of the hydroxyl group of 4-methyl-5-beta-hydroxyethylthiazole (THZ). In Burkholderia thailandensis (strain ATCC 700388 / DSM 13276 / CCUG 48851 / CIP 106301 / E264), this protein is Hydroxyethylthiazole kinase.